Reading from the N-terminus, the 43-residue chain is Cytochrome b559 subunit beta (43 aa).

The chain crosses the membrane as a helical span at residues 18 to 34 (WLAIHGLAIPTVFFLGG). Position 22 (His22) interacts with heme.

It belongs to the PsbE/PsbF family. Heterodimer of an alpha subunit and a beta subunit. PSII is composed of 1 copy each of membrane proteins PsbA, PsbB, PsbC, PsbD, PsbE, PsbF, PsbH, PsbI, PsbJ, PsbK, PsbL, PsbM, PsbT, PsbX, PsbY, PsbZ, Psb30/Ycf12, at least 3 peripheral proteins of the oxygen-evolving complex and a large number of cofactors. It forms dimeric complexes. It depends on heme b as a cofactor.

It is found in the plastid. The protein resides in the chloroplast thylakoid membrane. In terms of biological role, this b-type cytochrome is tightly associated with the reaction center of photosystem II (PSII). PSII is a light-driven water:plastoquinone oxidoreductase that uses light energy to abstract electrons from H(2)O, generating O(2) and a proton gradient subsequently used for ATP formation. It consists of a core antenna complex that captures photons, and an electron transfer chain that converts photonic excitation into a charge separation. The protein is Cytochrome b559 subunit beta of Trieres chinensis (Marine centric diatom).